The following is a 194-amino-acid chain: Small ribosomal subunit protein uS7 (194 aa).

The protein belongs to the universal ribosomal protein uS7 family. Part of the 30S ribosomal subunit.

Functionally, one of the primary rRNA binding proteins, it binds directly to 16S rRNA where it nucleates assembly of the head domain of the 30S subunit. Is located at the subunit interface close to the decoding center. This chain is Small ribosomal subunit protein uS7, found in Methanospirillum hungatei JF-1 (strain ATCC 27890 / DSM 864 / NBRC 100397 / JF-1).